A 239-amino-acid chain; its full sequence is Small ribosomal subunit protein uS2 (239 aa).

This sequence belongs to the universal ribosomal protein uS2 family.

This chain is Small ribosomal subunit protein uS2, found in Synechococcus sp. (strain CC9902).